Here is a 383-residue protein sequence, read N- to C-terminus: BRISC and BRCA1-A complex member 2 (383 aa).

Position 1 is an N-acetylmethionine (Met-1). Ser-2 carries the phosphoserine modification. UEV-like stretches follow at residues 30–147 (DATN…TLLE) and 275–364 (IAAF…RAKA).

This sequence belongs to the BABAM2 family. In terms of assembly, component of the ARISC complex, at least composed of UIMC1/RAP80, ABRAXAS1, BRCC3/BRCC36, BABAM2 and BABAM1/NBA1. Component of the BRCA1-A complex, at least composed of BRCA1, BARD1, UIMC1/RAP80, ABRAXAS1, BRCC3/BRCC36, BABAM2 and BABAM1/NBA1. In the BRCA1-A complex, interacts directly with ABRAXAS1, BRCC3/BRCC36 and BABAM1/NBA1. Binds polyubiquitin. Component of the BRISC complex, at least composed of ABRAXAS2, BRCC3/BRCC36, BABAM2 and BABAM1/NBA1. Identified in a complex with SHMT2 and the other subunits of the BRISC complex. Component of the BRCA1/BRCA2 containing complex (BRCC), which also contains BRCA1, BRCA2, BARD1, BRCC3/BRCC36 and RAD51. BRCC is a ubiquitin E3 ligase complex that enhances cellular survival following DNA damage. May interact with FAS and TNFRSF1A.

The protein resides in the cytoplasm. The protein localises to the nucleus. Functionally, component of the BRCA1-A complex, a complex that specifically recognizes 'Lys-63'-linked ubiquitinated histones H2A and H2AX at DNA lesions sites, leading to target the BRCA1-BARD1 heterodimer to sites of DNA damage at double-strand breaks (DSBs). The BRCA1-A complex also possesses deubiquitinase activity that specifically removes 'Lys-63'-linked ubiquitin on histones H2A and H2AX. In the BRCA1-A complex, it acts as an adapter that bridges the interaction between BABAM1/NBA1 and the rest of the complex, thereby being required for the complex integrity and modulating the E3 ubiquitin ligase activity of the BRCA1-BARD1 heterodimer. Component of the BRISC complex, a multiprotein complex that specifically cleaves 'Lys-63'-linked ubiquitin in various substrates. Within the BRISC complex, acts as an adapter that bridges the interaction between BABAM1/NBA1 and the rest of the complex, thereby being required for the complex integrity. The BRISC complex is required for normal mitotic spindle assembly and microtubule attachment to kinetochores via its role in deubiquitinating NUMA1. The BRISC complex plays a role in interferon signaling via its role in the deubiquitination of the interferon receptor IFNAR1; deubiquitination increases IFNAR1 activity by enhancing its stability and cell surface expression. Down-regulates the response to bacterial lipopolysaccharide (LPS) via its role in IFNAR1 deubiquitination. May play a role in homeostasis or cellular differentiation in cells of neural, epithelial and germline origins. May also act as a death receptor-associated anti-apoptotic protein, which inhibits the mitochondrial apoptotic pathway. May regulate TNF-alpha signaling through its interactions with TNFRSF1A; however these effects may be indirect. This chain is BRISC and BRCA1-A complex member 2 (BABAM2), found in Bos taurus (Bovine).